The sequence spans 292 residues: Ventral anterior homeobox 2 (292 aa).

The span at 1-36 shows a compositional bias: basic and acidic residues; sequence MGDGGAERDRGPKRREEPGGRSGRHGEHRGAEDLRA. Residues 1-74 are disordered; sequence MGDGGAERDR…DGQQALGETD (74 aa). A DNA-binding region (homeobox) is located at residues 102 to 161; that stretch reads PKRTRTSFTAEQLYRLEMEFQRCQYVVGRERTELARQLNLSETQVKVWFQNRRTKQKKDQ. The segment at 207 to 242 is disordered; sequence LPGLPASHRGTSLVDPRNSSPRLNPMPSASASSPLP.

Belongs to the EMX homeobox family. In terms of tissue distribution, expressed in the developing and mature retina.

It is found in the nucleus. Functionally, transcription factor that may function in dorsoventral specification of the forebrain. Regulates the expression of Wnt signaling antagonists including the expression of a truncated TCF7L2 isoform that cannot bind CTNNB1 and acts therefore as a potent dominant-negative Wnt antagonist. Plays a crucial role in eye development and, in particular, in the specification of the ventral optic vesicle. May be a regulator of axial polarization in the retina. This chain is Ventral anterior homeobox 2 (Vax2), found in Mus musculus (Mouse).